We begin with the raw amino-acid sequence, 249 residues long: Protein YIP5 (249 aa).

Transmembrane regions (helical) follow at residues 87 to 107, 131 to 151, 164 to 184, 188 to 208, and 228 to 248; these read LYGP…SNSI, ASII…ILVW, LYGY…PFGL, LASH…SIVF, and LLFG…LIFF.

The protein belongs to the YIP1 family. In terms of assembly, interacts with the YIP1 family members yip1 and yip4, and several Rab GTPases. The C-terminal cysteines in the Rab GTPase ypt2 are essential for the interaction. Interacts with snx3.

The protein localises to the membrane. Its function is as follows. Possible role in vesicle-mediated transport. May be involved in proper membrane localization of Rab GTPases. This Schizosaccharomyces pombe (strain 972 / ATCC 24843) (Fission yeast) protein is Protein YIP5.